Consider the following 883-residue polypeptide: Phosphoenolpyruvate carboxylase (883 aa).

Catalysis depends on residues H138 and K546.

It belongs to the PEPCase type 1 family. As to quaternary structure, homotetramer. Mg(2+) is required as a cofactor.

The enzyme catalyses oxaloacetate + phosphate = phosphoenolpyruvate + hydrogencarbonate. The enzyme has distinct binding sites for each of the allosteric effectors such as acetyl-CoA, fructose 1,6-bisphosphate, guanosine 3'-diphosphate 5'-diphosphate, long chain fatty acids, and L-aspartate. Forms oxaloacetate, a four-carbon dicarboxylic acid source for the tricarboxylic acid cycle. This chain is Phosphoenolpyruvate carboxylase, found in Escherichia coli O157:H7.